The chain runs to 449 residues: UDP-N-acetylmuramoylalanine--D-glutamate ligase (449 aa).

113 to 119 is a binding site for ATP; sequence GTNGKTT.

The protein belongs to the MurCDEF family.

It localises to the cytoplasm. It catalyses the reaction UDP-N-acetyl-alpha-D-muramoyl-L-alanine + D-glutamate + ATP = UDP-N-acetyl-alpha-D-muramoyl-L-alanyl-D-glutamate + ADP + phosphate + H(+). It functions in the pathway cell wall biogenesis; peptidoglycan biosynthesis. In terms of biological role, cell wall formation. Catalyzes the addition of glutamate to the nucleotide precursor UDP-N-acetylmuramoyl-L-alanine (UMA). The sequence is that of UDP-N-acetylmuramoylalanine--D-glutamate ligase from Microcystis aeruginosa (strain NIES-843 / IAM M-2473).